Reading from the N-terminus, the 546-residue chain is Methionine--tRNA ligase (546 aa).

The 'HIGH' region signature appears at 15–25 (PYANGPIHLGH). Zn(2+) contacts are provided by C146, C149, C159, and C162. The 'KMSKS' region signature appears at 332–336 (KMSKS). ATP is bound at residue K335.

It belongs to the class-I aminoacyl-tRNA synthetase family. MetG type 1 subfamily. Monomer. Requires Zn(2+) as cofactor.

It localises to the cytoplasm. It carries out the reaction tRNA(Met) + L-methionine + ATP = L-methionyl-tRNA(Met) + AMP + diphosphate. Its function is as follows. Is required not only for elongation of protein synthesis but also for the initiation of all mRNA translation through initiator tRNA(fMet) aminoacylation. The polypeptide is Methionine--tRNA ligase (Coxiella burnetii (strain RSA 331 / Henzerling II)).